The chain runs to 303 residues: Bidirectional sugar transporter SWEET14 (303 aa).

Over 1 to 9 (MAGMSLQHP) the chain is Extracellular. A helical transmembrane segment spans residues 10–30 (WAFAFGLLGNIISFMTYLAPL). In terms of domain architecture, MtN3/slv 1 spans 13–98 (AFGLLGNIIS…AVYLVYAPKK (86 aa)). At 31–44 (PTFYRIYKSKSTQG) the chain is on the cytoplasmic side. Residues 45–65 (FQSVPYVVALFSAMLWIYYAL) traverse the membrane as a helical segment. At 66-72 (LKSDECL) the chain is on the extracellular side. The chain crosses the membrane as a helical span at residues 73 to 93 (LITINSAGCVIETIYIAVYLV). Topologically, residues 94–105 (YAPKKAKMFTAK) are cytoplasmic. Residues 106-126 (LLLLVNVGVFGLILLLTLLLS) traverse the membrane as a helical segment. Residues 127–133 (AGDRRIV) are Extracellular-facing. Residues 134-154 (VLGWVCVGFSVSVFVAPLSII) form a helical membrane-spanning segment. Residues 134 to 217 (VLGWVCVGFS…MGLYAMYRNS (84 aa)) enclose the MtN3/slv 2 domain. Topologically, residues 155 to 167 (RLVVRTKSVEFMP) are cytoplasmic. The helical transmembrane segment at 168–188 (FSLSFSLTISAVVWFLYGLLI) threads the bilayer. Residues 189–192 (KDKY) lie on the Extracellular side of the membrane. The chain crosses the membrane as a helical span at residues 193 to 213 (VALPNVLGFSFGVIQMGLYAM). The Cytoplasmic portion of the chain corresponds to 214-303 (YRNSTPKAVL…AGAGEKKVAA (90 aa)). Residues 266–290 (HPVDVESPPAEAPPEEDDKAAAATA) form a disordered region.

This sequence belongs to the SWEET sugar transporter family. Forms homooligomers and/or heterooligomers.

It localises to the cell membrane. In terms of biological role, mediates both low-affinity uptake and efflux of sugar across the plasma membrane. Its function is as follows. Confers blight susceptibility. Confers TAL effector-mediated susceptibility to Xanthomonas oryzae pv. oryzae. This Oryza sativa subsp. japonica (Rice) protein is Bidirectional sugar transporter SWEET14 (SWEET14).